The following is a 223-amino-acid chain: Neurotrophic factor BDNF precursor form (223 aa).

A signal peptide spans 1–5 (SCMKA). Residues 6–114 (APMKEVSIRG…AANMSMRVRR (109 aa)) constitute a propeptide that is removed on maturation. N-linked (GlcNAc...) asparagine glycosylation is present at asparagine 107. 2 disulfide bridges follow: cysteine 127-cysteine 194 and cysteine 172-cysteine 223.

This sequence belongs to the NGF-beta family.

It localises to the secreted. Its function is as follows. Promotes the survival of neuronal populations that are all located either in the central nervous system or directly connected to it. This is Neurotrophic factor BDNF precursor form (BDNF) from Chilabothrus striatus (Haitian boa constrictor).